The chain runs to 239 residues: Lipoprotein-releasing system ATP-binding protein LolD (239 aa).

Residues 10–239 form the ABC transporter domain; it reads VELSGVRKDY…ADGPHRRSGA (230 aa). 46-53 contributes to the ATP binding site; that stretch reads GPSGSGKS.

It belongs to the ABC transporter superfamily. Lipoprotein translocase (TC 3.A.1.125) family. The complex is composed of two ATP-binding proteins (LolD) and two transmembrane proteins (LolC and LolE).

Its subcellular location is the cell inner membrane. Part of the ABC transporter complex LolCDE involved in the translocation of mature outer membrane-directed lipoproteins, from the inner membrane to the periplasmic chaperone, LolA. Responsible for the formation of the LolA-lipoprotein complex in an ATP-dependent manner. The polypeptide is Lipoprotein-releasing system ATP-binding protein LolD (Anaeromyxobacter dehalogenans (strain 2CP-C)).